A 256-amino-acid chain; its full sequence is Alcohol dehydrogenase (256 aa).

Position 12–35 (12–35 (FVAGLGGIGLDTSKELVKRDLKNL)) interacts with NAD(+). A substrate-binding site is contributed by Ser-140. Tyr-153 serves as the catalytic Proton acceptor.

This sequence belongs to the short-chain dehydrogenases/reductases (SDR) family. In terms of assembly, homodimer.

It catalyses the reaction a primary alcohol + NAD(+) = an aldehyde + NADH + H(+). The catalysed reaction is a secondary alcohol + NAD(+) = a ketone + NADH + H(+). The polypeptide is Alcohol dehydrogenase (Adh) (Drosophila tsacasi (Fruit fly)).